We begin with the raw amino-acid sequence, 237 residues long: Mitochondrial inner membrane protease atp23 (237 aa).

Residues 1–13 (MSDSQPCSTPSTR) show a composition bias toward polar residues. A disordered region spans residues 1–23 (MSDSQPCSTPSTRGKSDSGYIPG). Histidine 136 provides a ligand contact to a divalent metal cation. Residue glutamate 137 is part of the active site. Histidine 140 provides a ligand contact to a divalent metal cation.

Belongs to the peptidase M76 family.

It localises to the mitochondrion inner membrane. In terms of biological role, has a dual role in the assembly of mitochondrial ATPase. Acts as a protease that removes N-terminal residues of mitochondrial ATPase CF(0) subunit 6 at the intermembrane space side. Also involved in the correct assembly of the membrane-embedded ATPase CF(0) particle, probably mediating association of subunit 6 with the subunit 9 ring. The polypeptide is Mitochondrial inner membrane protease atp23 (atp23) (Aspergillus fumigatus (strain ATCC MYA-4609 / CBS 101355 / FGSC A1100 / Af293) (Neosartorya fumigata)).